Reading from the N-terminus, the 775-residue chain is Glutamine--tRNA ligase (775 aa).

A2 is modified (N-acetylalanine). Position 70 is a phosphoserine (S70). ATP contacts are provided by residues 271-273 and 277-283; these read EPN and HIGHAKA. D303 is an L-glutamine binding site. N6-acetyllysine is present on K309. Y438 contributes to the L-glutamine binding site. ATP is bound by residues T457, 486 to 487, and 494 to 496; these read RL and VSK. S495 carries the post-translational modification Phosphoserine.

It belongs to the class-I aminoacyl-tRNA synthetase family. In terms of assembly, monomer. Part of a multisubunit complex that groups tRNA ligases for Arg (RARS1), Asp (DARS1), Gln (QARS1), Ile (IARS1), Leu (LARS1), Lys (KARS1), Met (MARS1) the bifunctional ligase for Glu and Pro (EPRS1) and the auxiliary subunits AIMP1/p43, AIMP2/p38 and EEF1E1/p18. Interacts with RARS1. Part of a complex composed of RARS1, QARS1 and AIMP1.

The protein localises to the cytoplasm. It localises to the cytosol. It carries out the reaction tRNA(Gln) + L-glutamine + ATP = L-glutaminyl-tRNA(Gln) + AMP + diphosphate. Functionally, glutamine--tRNA ligase. Plays a critical role in brain development. The polypeptide is Glutamine--tRNA ligase (Qars1) (Mus musculus (Mouse)).